Reading from the N-terminus, the 628-residue chain is Putative pentatricopeptide repeat-containing protein At3g13770, mitochondrial (628 aa).

A mitochondrion-targeting transit peptide spans 1-19 (MFNLMRLIHRSFSSSPTNY). PPR repeat units follow at residues 51 to 85 (GFHG…RYLP), 86 to 116 (ATYL…MPEK), 117 to 151 (NVVS…DGKP), 152 to 186 (NEFT…NYDS), 187 to 217 (HIFV…LPER), 218 to 252 (DVVS…GMSP), 253 to 287 (NYVT…ELPF), 288 to 318 (YAVL…MPER), 319 to 353 (TAIS…KRVK), 355 to 389 (DAVT…EYGT), and 392 to 422 (GTEH…MPSK). Residues 427-502 (VLGSLLGACR…EPGRSWIQHE (76 aa)) are type E motif. A type E(+) motif region spans residues 503 to 533 (QTLHYFHANDRTHPRREEVLAKMKEISIKMK). The segment at 534–628 (QAGYVPDLSC…DGICSCGDYW (95 aa)) is type DYW motif.

It belongs to the PPR family. PCMP-H subfamily.

Its subcellular location is the mitochondrion. The sequence is that of Putative pentatricopeptide repeat-containing protein At3g13770, mitochondrial (PCMP-H85) from Arabidopsis thaliana (Mouse-ear cress).